The sequence spans 352 residues: Geranylgeranyl transferase type-1 subunit beta (352 aa).

4 PFTB repeats span residues 135–180 (VNKK…FILD), 187–228 (KESA…SLLG), 236–276 (FKEQ…MMID), and 283–325 (FASI…SFGN). Residues 213–215 (HGG) and 255–258 (RTNK) contribute to the geranylgeranyl diphosphate site. Residues Asp261 and Cys263 each contribute to the Zn(2+) site. 264–267 (YAFW) contacts geranylgeranyl diphosphate. His313 provides a ligand contact to Zn(2+).

Belongs to the protein prenyltransferase subunit beta family. Heterodimer of an alpha and a beta subunit. Zn(2+) is required as a cofactor. The cofactor is Mg(2+).

It carries out the reaction geranylgeranyl diphosphate + L-cysteinyl-[protein] = S-geranylgeranyl-L-cysteinyl-[protein] + diphosphate. Functionally, catalyzes the transfer of a geranyl-geranyl moiety from geranyl-geranyl pyrophosphate to a cysteine at the fourth position from the C-terminus of proteins having the C-terminal sequence Cys-aliphatic-aliphatic-X. This is Geranylgeranyl transferase type-1 subunit beta (pggt1b) from Dictyostelium discoideum (Social amoeba).